Consider the following 4241-residue polypeptide: Intermembrane lipid transfer protein vps13E (4241 aa).

A Chorein N-terminal domain is found at 5-97; that stretch reads ILPGLLKKIL…GPKDIINTFS (93 aa). Residues 120–140 are compositionally biased toward low complexity; it reads IDSNSNNNNKKNAPSSSSSND. 8 disordered regions span residues 120 to 143, 234 to 340, 942 to 986, 1220 to 1256, 1345 to 1369, 1534 to 1571, 2148 to 2192, and 2217 to 2282; these read IDSN…DDFF, LSKN…QQQQ, LGTG…VEKE, NNNN…NQKP, TTTT…QNRH, KPSS…YNNN, QQQQ…PNVH, and VTEK…NNIN. A compositionally biased stretch (polar residues) spans 234-254; that stretch reads LSKNTSTHQQQQPTFNPYVGS. The segment covering 255–264 has biased composition (low complexity); it reads QQQQQQQPQQ. Over residues 279–289 the composition is skewed to polar residues; sequence FMNNKNSDEGI. Composition is skewed to low complexity over residues 290–313, 325–340, and 942–952; these read SSSS…LNDN, QPTP…QQQQ, and LGTGNGINNNN. Over residues 968 to 986 the composition is skewed to basic and acidic residues; the sequence is DDGKYPEQDDLDDSKVEKE. The segment covering 1220 to 1253 has biased composition (low complexity); sequence NNNNNNNNNNNNNNNNNNNNNRNLNNNNNNNNNN. A compositionally biased stretch (basic residues) spans 1352–1369; the sequence is RYHHQNHHNHQHKKQNRH. Low complexity-rich tracts occupy residues 1538-1551, 1559-1571, and 2148-2177; these read KDNN…NNSD, DSSS…YNNN, and QQQQ…NNNN. Over residues 2178–2188 the composition is skewed to polar residues; the sequence is VSGNTINNKSV. The segment covering 2246–2259 has biased composition (acidic residues); the sequence is SDDDDDEGEDEDIG. Residues 2265–2282 show a composition bias toward polar residues; that stretch reads DHSTSSAPTSRSNYNNIN. The SHR-BD domain maps to 2825-3134; it reads KIVFYNQYWI…IPYVWDLPLE (310 aa). Disordered stretches follow at residues 3973-4000, 4059-4094, and 4109-4140; these read PTTT…YPTE, YQHS…RQLQ, and KSMA…SGSG. A compositionally biased stretch (low complexity) spans 3974–3984; the sequence is TTTTTTNTTTT. Over residues 3985-4000 the composition is skewed to polar residues; sequence PYQSSQNIHSTPYPTE. A compositionally biased stretch (polar residues) spans 4128–4140; it reads SNNRLSLTPSGSG.

It belongs to the VPS13 family.

It is found in the membrane. Its function is as follows. Mediates the transfer of lipids between membranes at organelle contact sites. The sequence is that of Intermembrane lipid transfer protein vps13E (vps13E) from Dictyostelium discoideum (Social amoeba).